The primary structure comprises 98 residues: Putative septation protein SpoVG (98 aa).

This sequence belongs to the SpoVG family.

Its function is as follows. Essential for sporulation. Interferes with or is a negative regulator of the pathway leading to asymmetric septation. In Shouchella clausii (strain KSM-K16) (Alkalihalobacillus clausii), this protein is Putative septation protein SpoVG.